Reading from the N-terminus, the 615-residue chain is UvrABC system protein C (615 aa).

Residues 14 to 91 (TSPGCYIHKD…IKENKPKYNI (78 aa)) enclose the GIY-YIG domain. The 36-residue stretch at 196 to 231 (NKIIDELKGKMAAAAQTMEFERAAEYRDLIQAIGTL) folds into the UVR domain.

Belongs to the UvrC family. As to quaternary structure, interacts with UvrB in an incision complex.

Its subcellular location is the cytoplasm. The UvrABC repair system catalyzes the recognition and processing of DNA lesions. UvrC both incises the 5' and 3' sides of the lesion. The N-terminal half is responsible for the 3' incision and the C-terminal half is responsible for the 5' incision. The sequence is that of UvrABC system protein C from Streptococcus pneumoniae (strain ATCC 700669 / Spain 23F-1).